The following is a 20-amino-acid chain: Endo-1,6-beta-glucanase (20 aa).

Belongs to the glycosyl hydrolase 5 (cellulase A) family.

The protein resides in the secreted. It is found in the extracellular space. It catalyses the reaction Random hydrolysis of (1-&gt;6)-linkages in (1-&gt;6)-beta-D-glucans.. Endo-1,6-beta-glucanase that has highest activity against the beta-1,6-glucan pustulan. Also active against the beta-1,6-glucan lutean. Lower activity against laminarin (beta-1,3-glucan with beta-1,6-branches). Little or no activity against gentiobiose, yeast glucan, lichenin, scleroglucan, curdlan, barley glucan, CM cellulose, HE cellulose, pachyman and pullulan. The sequence is that of Endo-1,6-beta-glucanase from Acremonium sp.